The following is a 463-amino-acid chain: Type I restriction enzyme StySPI specificity subunit (463 aa).

The protein belongs to the type-I restriction system S methylase family. As to quaternary structure, the type I restriction/modification system is composed of three polypeptides R, M and S; the restriction enzyme has stoichiometry R(2)M(2)S(1) while the methyltransferase is M(2)S(1).

Functionally, the specificity (S) subunit of a type I restriction enzyme; this subunit dictates DNA sequence specificity. The M and S subunits together form a methyltransferase (MTase) that methylates A-2 on the top strand and A-3 on the bottom strand of the sequence 5'-AACN(6)GTRC-3'. In the presence of the R subunit the complex can also act as an endonuclease, binding to the same target sequence but cutting the DNA some distance from this site. Whether the DNA is cut or modified depends on the methylation state of the target sequence. When the target site is unmodified, the DNA is cut. When the target site is hemimethylated, the complex acts as a maintenance MTase modifying the DNA so that both strands become methylated. After locating a non-methylated recognition site, the enzyme complex serves as a molecular motor that translocates DNA in an ATP-dependent manner until a collision occurs that triggers cleavage. The polypeptide is Type I restriction enzyme StySPI specificity subunit (Salmonella potsdam).